We begin with the raw amino-acid sequence, 82 residues long: Acyl carrier protein (82 aa).

The Carrier domain maps to 4–79 (PEMEARLKQI…DALNYIEQKL (76 aa)). At S39 the chain carries O-(pantetheine 4'-phosphoryl)serine.

This sequence belongs to the acyl carrier protein (ACP) family. Post-translationally, 4'-phosphopantetheine is transferred from CoA to a specific serine of apo-ACP by AcpS. This modification is essential for activity because fatty acids are bound in thioester linkage to the sulfhydryl of the prosthetic group.

It localises to the cytoplasm. Its pathway is lipid metabolism; fatty acid biosynthesis. Its function is as follows. Carrier of the growing fatty acid chain in fatty acid biosynthesis. The polypeptide is Acyl carrier protein (Roseiflexus castenholzii (strain DSM 13941 / HLO8)).